Consider the following 330-residue polypeptide: Small ribosomal subunit protein uS15m (330 aa).

It belongs to the universal ribosomal protein uS15 family. In terms of assembly, component of the mitochondrial ribosome small subunit (28S) which comprises a 12S rRNA and about 30 distinct proteins.

Its subcellular location is the mitochondrion. In Caenorhabditis elegans, this protein is Small ribosomal subunit protein uS15m (mrps-15).